We begin with the raw amino-acid sequence, 441 residues long: tRNA-2-methylthio-N(6)-dimethylallyladenosine synthase (441 aa).

Residues 5–121 (KKLFIKTYGC…LPQMEARLRE (117 aa)) form the MTTase N-terminal domain. [4Fe-4S] cluster contacts are provided by Cys-14, Cys-50, Cys-84, Cys-159, Cys-163, and Cys-166. One can recognise a Radical SAM core domain in the interval 145-380 (ARRAPSAFLT…TRQQQDIQQS (236 aa)). Residues 379–441 (QSMVGRDVSV…RNSLAAVTLA (63 aa)) enclose the TRAM domain.

Belongs to the methylthiotransferase family. MiaB subfamily. In terms of assembly, monomer. Requires [4Fe-4S] cluster as cofactor.

It localises to the cytoplasm. The enzyme catalyses N(6)-dimethylallyladenosine(37) in tRNA + (sulfur carrier)-SH + AH2 + 2 S-adenosyl-L-methionine = 2-methylsulfanyl-N(6)-dimethylallyladenosine(37) in tRNA + (sulfur carrier)-H + 5'-deoxyadenosine + L-methionine + A + S-adenosyl-L-homocysteine + 2 H(+). In terms of biological role, catalyzes the methylthiolation of N6-(dimethylallyl)adenosine (i(6)A), leading to the formation of 2-methylthio-N6-(dimethylallyl)adenosine (ms(2)i(6)A) at position 37 in tRNAs that read codons beginning with uridine. In Roseobacter denitrificans (strain ATCC 33942 / OCh 114) (Erythrobacter sp. (strain OCh 114)), this protein is tRNA-2-methylthio-N(6)-dimethylallyladenosine synthase.